We begin with the raw amino-acid sequence, 218 residues long: Imidazole glycerol phosphate synthase subunit HisH (218 aa).

The Glutamine amidotransferase type-1 domain maps to 5 to 213 (RLAVIDYEAG…VEFVARCSPL (209 aa)). Catalysis depends on C83, which acts as the Nucleophile. Catalysis depends on residues H188 and E190.

In terms of assembly, heterodimer of HisH and HisF.

Its subcellular location is the cytoplasm. It carries out the reaction 5-[(5-phospho-1-deoxy-D-ribulos-1-ylimino)methylamino]-1-(5-phospho-beta-D-ribosyl)imidazole-4-carboxamide + L-glutamine = D-erythro-1-(imidazol-4-yl)glycerol 3-phosphate + 5-amino-1-(5-phospho-beta-D-ribosyl)imidazole-4-carboxamide + L-glutamate + H(+). The enzyme catalyses L-glutamine + H2O = L-glutamate + NH4(+). It participates in amino-acid biosynthesis; L-histidine biosynthesis; L-histidine from 5-phospho-alpha-D-ribose 1-diphosphate: step 5/9. In terms of biological role, IGPS catalyzes the conversion of PRFAR and glutamine to IGP, AICAR and glutamate. The HisH subunit catalyzes the hydrolysis of glutamine to glutamate and ammonia as part of the synthesis of IGP and AICAR. The resulting ammonia molecule is channeled to the active site of HisF. The sequence is that of Imidazole glycerol phosphate synthase subunit HisH from Synechococcus sp. (strain JA-2-3B'a(2-13)) (Cyanobacteria bacterium Yellowstone B-Prime).